The following is a 324-amino-acid chain: dITP/XTP pyrophosphatase (324 aa).

The unknown stretch occupies residues 1-127; sequence MTKTIFESKT…KNDNNFGDTI (127 aa). Residues 128–324 are NTP pyrophosphatase; the sequence is LIATHNEGKT…EVFPKWQLEN (197 aa). 131–136 contacts substrate; it reads THNEGK. Glu-164 and Asp-193 together coordinate Mg(2+). Asp-193 acts as the Proton acceptor in catalysis. Residues Ser-194, 277–280, Lys-300, and 305–306 contribute to the substrate site; these read FGYD and HR.

This sequence belongs to the HAM1 NTPase family. As to quaternary structure, homodimer. The cofactor is Mg(2+).

The catalysed reaction is XTP + H2O = XMP + diphosphate + H(+). It carries out the reaction dITP + H2O = dIMP + diphosphate + H(+). It catalyses the reaction ITP + H2O = IMP + diphosphate + H(+). Functionally, pyrophosphatase that catalyzes the hydrolysis of nucleoside triphosphates to their monophosphate derivatives, with a high preference for the non-canonical purine nucleotides XTP (xanthosine triphosphate), dITP (deoxyinosine triphosphate) and ITP. Seems to function as a house-cleaning enzyme that removes non-canonical purine nucleotides from the nucleotide pool, thus preventing their incorporation into DNA/RNA and avoiding chromosomal lesions. The chain is dITP/XTP pyrophosphatase from Streptococcus agalactiae serotype III (strain NEM316).